Here is a 135-residue protein sequence, read N- to C-terminus: uncharacterized protein (135 aa).

This is an uncharacterized protein from Mycoplasma pneumoniae (strain ATCC 29342 / M129 / Subtype 1) (Mycoplasmoides pneumoniae).